Here is a 287-residue protein sequence, read N- to C-terminus: Ribonuclease HII (287 aa).

One can recognise an RNase H type-2 domain in the interval 61-287 (ALQIGVDEAG…FAPVRKALES (227 aa)). Positions 67, 68, and 186 each coordinate a divalent metal cation.

It belongs to the RNase HII family. The cofactor is Mn(2+). Mg(2+) serves as cofactor.

The protein localises to the cytoplasm. It catalyses the reaction Endonucleolytic cleavage to 5'-phosphomonoester.. Its function is as follows. Endonuclease that specifically degrades the RNA of RNA-DNA hybrids. The sequence is that of Ribonuclease HII from Psychrobacter arcticus (strain DSM 17307 / VKM B-2377 / 273-4).